Here is a 650-residue protein sequence, read N- to C-terminus: Gamma-tubulin complex component 4 homolog (650 aa).

Phosphoserine is present on S214. T216 carries the phosphothreonine modification. A Phosphoserine modification is found at S218.

Belongs to the TUBGCP family.

The protein resides in the cytoplasm. Its subcellular location is the cytoskeleton. The protein localises to the microtubule organizing center. It localises to the centrosome. In terms of biological role, gamma-tubulin complex is necessary for microtubule nucleation at the centrosome. The protein is Gamma-tubulin complex component 4 homolog (Grip75) of Drosophila melanogaster (Fruit fly).